Here is a 371-residue protein sequence, read N- to C-terminus: Probable palmitoyltransferase ZDHHC11B (371 aa).

A run of 2 helical transmembrane segments spans residues 43-63 (VVTWAVFVGLSLATFRIFIPL) and 70-90 (YIAYVVTGGIFSFHLVVHLIA). The DHHC domain maps to 125–175 (QFCHLCKVTVNKKTKHCISCNKCVSGFDHHCKWINNCVGSRNYWFFFSTVA). The S-palmitoyl cysteine intermediate role is filled by C155. Helical transmembrane passes span 177–197 (ATAGMLCLIAILLYVLVQYLV), 216–236 (TWLLFLPLFPVQVQTLIVVII), and 239–259 (LVLLLDLLGLVQLGQLLIFHI). Residues 335-371 (DGDSKAQEADDAPSTSTLGLQQETTEPMKTDSAESED) form a disordered region. Over residues 347–359 (PSTSTLGLQQETT) the composition is skewed to polar residues. The span at 360 to 371 (EPMKTDSAESED) shows a compositional bias: basic and acidic residues.

This sequence belongs to the DHHC palmitoyltransferase family.

It is found in the membrane. The catalysed reaction is L-cysteinyl-[protein] + hexadecanoyl-CoA = S-hexadecanoyl-L-cysteinyl-[protein] + CoA. Its function is as follows. Probable palmitoyltransferase that could catalyze the addition of palmitate onto various protein substrates and be involved in a variety of cellular processes. May play a role in cell proliferation. This is Probable palmitoyltransferase ZDHHC11B from Homo sapiens (Human).